We begin with the raw amino-acid sequence, 281 residues long: Transcription factor lfc1 (281 aa).

The segment at residues 60–87 (CLTCRMKKIKCDETKPTCARCTHGQREC) is a DNA-binding region (zn(2)-C6 fungal-type).

It is found in the nucleus. Functionally, transcription factor that acts as a negative regulator of basidioma development via repressing the expression of genes involved in basidioma development, including hydrophobins such as Hyd-1 and Hyd-8, lectins such as JRL1, as well as the fruiting body differentiation gene FVFD16. In Flammulina velutipes (Agaricus velutipes), this protein is Transcription factor lfc1.